The primary structure comprises 683 residues: Acyl-CoA synthetase short-chain family member 3, mitochondrial (683 aa).

A mitochondrion-targeting transit peptide spans 1–29 (MKPSWLQCRKVTGAGTLGAPLPGSPSVRG). 223–226 (EPGR) serves as a coordination point for CoA. ATP is bound by residues 421–423 (GER) and 442–447 (DHWWQT). Lysine 514 bears the N6-succinyllysine mark. Lysine 520 carries the post-translational modification N6-acetyllysine. ATP contacts are provided by aspartate 535, arginine 550, and arginine 561. Arginine 620 contacts CoA.

It belongs to the ATP-dependent AMP-binding enzyme family. In terms of tissue distribution, expressed in a wide range of tissues, with the highest levels observed in the liver followed by kidney.

The protein resides in the mitochondrion matrix. It carries out the reaction acetate + ATP + CoA = acetyl-CoA + AMP + diphosphate. The catalysed reaction is propanoate + ATP + CoA = propanoyl-CoA + AMP + diphosphate. It catalyses the reaction butanoate + ATP + CoA = butanoyl-CoA + AMP + diphosphate. In terms of biological role, catalyzes the synthesis of acetyl-CoA from short-chain fatty acids. Propionate is the preferred substrate but can also utilize acetate and butyrate with a much lower affinity. This chain is Acyl-CoA synthetase short-chain family member 3, mitochondrial (Acss3), found in Rattus norvegicus (Rat).